The chain runs to 139 residues: Protein archease (139 aa).

Ca(2+) contacts are provided by Asp-12, Asp-138, and Ile-139.

It belongs to the archease family.

Activates the tRNA-splicing ligase complex by facilitating the enzymatic turnover of catalytic subunit RtcB. Acts by promoting the guanylylation of RtcB, a key intermediate step in tRNA ligation. Can also alter the NTP specificity of RtcB such that ATP, dGTP or ITP is used efficiently. The chain is Protein archease from Saccharolobus islandicus (strain M.16.27) (Sulfolobus islandicus).